Consider the following 133-residue polypeptide: Small ribosomal subunit protein uS8 (133 aa).

This sequence belongs to the universal ribosomal protein uS8 family. In terms of assembly, part of the 30S ribosomal subunit. Contacts proteins S5 and S12.

One of the primary rRNA binding proteins, it binds directly to 16S rRNA central domain where it helps coordinate assembly of the platform of the 30S subunit. In Chlamydia trachomatis serovar A (strain ATCC VR-571B / DSM 19440 / HAR-13), this protein is Small ribosomal subunit protein uS8.